Consider the following 591-residue polypeptide: ATP-dependent RNA helicase HAS1 (591 aa).

The segment covering 1 to 11 (MDFASSKKRKF) has biased composition (basic residues). A disordered region spans residues 1–108 (MDFASSKKRK…PNGGQLTLPP (108 aa)). Acidic residues predominate over residues 45 to 92 (DEPEDDSSDEEEQALKEVEDESDQADEDVEAANSAEEEEEEGGDEDNA). Residues 115–143 (QSFEELKLSEKTMKAINEMKFTKMTEIQR) carry the Q motif motif. One can recognise a Helicase ATP-binding domain in the interval 146–321 (IPPSLAGRDV…RISLRPGPLY (176 aa)). An ATP-binding site is contributed by 159–166 (AKTGSGKT). A DEAD box motif is present at residues 268-271 (DEAD). The Helicase C-terminal domain maps to 335–495 (GLEQGYIICE…EFNFPTKKII (161 aa)). Residues 347-363 (MRFLLLFSFLKRNLKKK) carry the Bipartite nuclear localization signal motif. Residues 560–591 (TLGASMSRDKKQQGRRAYGSQPRQNQGNKFTR) form a disordered region. The span at 580–591 (QPRQNQGNKFTR) shows a compositional bias: polar residues.

The protein belongs to the DEAD box helicase family. DDX18/HAS1 subfamily. As to quaternary structure, associates in the nucleolus with the 60S and pre-60S ribosomal subunits.

It localises to the nucleus. It is found in the nucleolus. The catalysed reaction is ATP + H2O = ADP + phosphate + H(+). In terms of biological role, ATP-dependent RNA helicase involved in 40S ribosomal subunit biogenesis. Required for the processing and cleavage of 35S pre-rRNA at sites A0, A1, and A2, leading to mature 18S rRNA. The protein is ATP-dependent RNA helicase HAS1 (HAS1) of Gibberella zeae (strain ATCC MYA-4620 / CBS 123657 / FGSC 9075 / NRRL 31084 / PH-1) (Wheat head blight fungus).